We begin with the raw amino-acid sequence, 1153 residues long: Otoancorin (1153 aa).

The first 22 residues, 1 to 22, serve as a signal peptide directing secretion; that stretch reads MSQEPTTYSLFLFLFLSHGVSS. N156 carries an N-linked (GlcNAc...) asparagine glycan. The N-linked (GlcNAc...) (complex) asparagine glycan is linked to N211. N-linked (GlcNAc...) asparagine glycans are attached at residues N244, N289, N321, N394, N398, N460, N544, N812, N911, and N974. The disordered stretch occupies residues 1109–1128; the sequence is HSWQDAPASAGPTRTSSSRS. A lipid anchor (GPI-anchor amidated alanine) is attached at A1130. Residues 1131 to 1153 constitute a propeptide, removed in mature form; that stretch reads GALQSWGLWLGCPLLVLMAKLLW.

This sequence belongs to the stereocilin family.

The protein localises to the apical cell membrane. It localises to the secreted. Its subcellular location is the extracellular space. The protein resides in the extracellular matrix. In terms of biological role, may act as an adhesion molecule. This is Otoancorin (OTOA) from Homo sapiens (Human).